Consider the following 136-residue polypeptide: Protein NrdI (136 aa).

It belongs to the NrdI family.

Probably involved in ribonucleotide reductase function. This chain is Protein NrdI, found in Salmonella dublin (strain CT_02021853).